We begin with the raw amino-acid sequence, 194 residues long: Putative 3-methyladenine DNA glycosylase (194 aa).

Belongs to the DNA glycosylase MPG family.

The protein is Putative 3-methyladenine DNA glycosylase of Mycolicibacterium fortuitum (Mycobacterium fortuitum).